The chain runs to 149 residues: SsrA-binding protein (149 aa).

This sequence belongs to the SmpB family.

Its subcellular location is the cytoplasm. Required for rescue of stalled ribosomes mediated by trans-translation. Binds to transfer-messenger RNA (tmRNA), required for stable association of tmRNA with ribosomes. tmRNA and SmpB together mimic tRNA shape, replacing the anticodon stem-loop with SmpB. tmRNA is encoded by the ssrA gene; the 2 termini fold to resemble tRNA(Ala) and it encodes a 'tag peptide', a short internal open reading frame. During trans-translation Ala-aminoacylated tmRNA acts like a tRNA, entering the A-site of stalled ribosomes, displacing the stalled mRNA. The ribosome then switches to translate the ORF on the tmRNA; the nascent peptide is terminated with the 'tag peptide' encoded by the tmRNA and targeted for degradation. The ribosome is freed to recommence translation, which seems to be the essential function of trans-translation. The sequence is that of SsrA-binding protein from Anaplasma marginale (strain St. Maries).